The following is a 687-amino-acid chain: Protein-glutamine gamma-glutamyltransferase 2 (687 aa).

An N-acetylalanine modification is found at A2. S60 is subject to Phosphoserine. Disulfide bonds link C230–C370 and C370–C371. Catalysis depends on residues C277, H335, and D358. Ca(2+)-binding residues include N398, D400, E437, E447, and E452. Residue K468 is modified to N6-acetyllysine. 476–483 (RIRVGQSM) is a binding site for GTP. E539 serves as a coordination point for Ca(2+). Position 580–583 (580–583 (RDLY)) interacts with GTP. Q633 participates in a covalent cross-link: Isoglutamyl lysine isopeptide (Gln-Lys) (interchain with K-?).

It belongs to the transglutaminase superfamily. Transglutaminase family. Monomer. Interacts with phospholipase C; promoting alpha-1 adrenergic receptor signaling. Interacts with PLCD1. In terms of assembly, homooligomer. Ca(2+) is required as a cofactor. Post-translationally, disulfide bond formation inactivates the calcium-dependent acyltransferase activity. Cys-370 can form disulfide bonds with both Cys-230 and Cys-371: formation of a disulfide bond between Cys-230 and Cys-370 facilitates formation of the disulfide between Cys-370 and Cys-371, which promotes inactivation of the acyltransferase activity. May also form interchain disulfids between Cys-230 and Cys-370. Ca(2+) protects against disulfide bond formation and inactivation. In terms of processing, auto-transglutaminated: Forms covalent cross-links mediated by transglutaminase between Gln-633 and the epsilon-amino group of a lysine residue of itself or HMGB1, forming homopolymers and heteropolymers, respectively. S-nitrosylated, leading to inactivation of the acyltransferase activity.

It localises to the cytoplasm. The protein localises to the cytosol. Its subcellular location is the nucleus. The protein resides in the chromosome. It is found in the secreted. It localises to the extracellular space. The protein localises to the extracellular matrix. Its subcellular location is the cell membrane. The protein resides in the mitochondrion. It is found in the perinuclear region. It catalyses the reaction L-glutaminyl-[protein] + L-lysyl-[protein] = [protein]-L-lysyl-N(6)-5-L-glutamyl-[protein] + NH4(+). It carries out the reaction L-glutaminyl-[protein] + serotonin = 5-serotonyl-L-glutamyl-[protein] + NH4(+). The catalysed reaction is L-glutaminyl-[protein] + dopamine = 5-dopaminyl-L-glutamyl-[protein] + NH4(+). The enzyme catalyses L-glutaminyl-[protein] + histamine = 5-histaminyl-L-glutamyl-[protein] + NH4(+). It catalyses the reaction L-glutaminyl-[protein] + (R)-noradrenaline = 5-(R)-noradrenalinyl-L-glutamyl-[protein] + NH4(+). It carries out the reaction L-glutaminyl-[protein] + H2O = L-glutamyl-[protein] + NH4(+). Acyltransferase activity is regulated by the binding of GTP and Ca(2+): inactivated by GTP, which stabilizes its closed structure, thereby obstructing the accessibility of substrates to the active sites. In contrast, Ca(2+) acts as a cofactor by inducing conformational change to the active open form. In absence of Ca(2+), Mg(2+) may bind Ca(2+)-binding sites, promoting GTP-binding and subsequent inhibition of the acyltransferase activity. Extracellularly reduced and activated by CLIC3. Specifically inhibited by compound VA4 ((S)-Benzyl (6-Acrylamido-1-(4-((5-(dimethylamino)naphthalen-1-yl)sulfonyl)piperazin-1-yl)-1-oxohexan-2-yl)carbamate), which specifically abolishes both the transamidation and GTP-binding activities. Its function is as follows. Calcium-dependent acyltransferase that catalyzes the formation of covalent bonds between peptide-bound glutamine and various primary amines, such as gamma-amino group of peptide-bound lysine, or mono- and polyamines, thereby producing cross-linked or aminated proteins, respectively. Involved in many biological processes, such as bone development, angiogenesis, wound healing, cellular differentiation, chromatin modification and apoptosis. Acts as a protein-glutamine gamma-glutamyltransferase by mediating the cross-linking of proteins, such as ACO2, HSPB6, FN1, HMGB1, RAP1GDS1, SLC25A4/ANT1, SPP1 and WDR54. Under physiological conditions, the protein cross-linking activity is inhibited by GTP; inhibition is relieved by Ca(2+) in response to various stresses. When secreted, catalyzes cross-linking of proteins of the extracellular matrix, such as FN1 and SPP1 resulting in the formation of scaffolds. Plays a key role during apoptosis, both by (1) promoting the cross-linking of cytoskeletal proteins resulting in condensation of the cytoplasm, and by (2) mediating cross-linking proteins of the extracellular matrix, resulting in the irreversible formation of scaffolds that stabilize the integrity of the dying cells before their clearance by phagocytosis, thereby preventing the leakage of harmful intracellular components. In addition to protein cross-linking, can use different monoamine substrates to catalyze a vast array of protein post-translational modifications: mediates aminylation of serotonin, dopamine, noradrenaline or histamine into glutamine residues of target proteins to generate protein serotonylation, dopaminylation, noradrenalinylation or histaminylation, respectively. Mediates protein serotonylation of small GTPases during activation and aggregation of platelets, leading to constitutive activation of these GTPases. Plays a key role in chromatin organization by mediating serotonylation and dopaminylation of histone H3. Catalyzes serotonylation of 'Gln-5' of histone H3 (H3Q5ser) during serotonergic neuron differentiation, thereby facilitating transcription. Acts as a mediator of neurotransmission-independent role of nuclear dopamine in ventral tegmental area (VTA) neurons: catalyzes dopaminylation of 'Gln-5' of histone H3 (H3Q5dop), thereby regulating relapse-related transcriptional plasticity in the reward system. Regulates vein remodeling by mediating serotonylation and subsequent inactivation of ATP2A2/SERCA2. Also acts as a protein deamidase by mediating the side chain deamidation of specific glutamine residues of proteins to glutamate. Catalyzes specific deamidation of protein gliadin, a component of wheat gluten in the diet. May also act as an isopeptidase cleaving the previously formed cross-links. Also able to participate in signaling pathways independently of its acyltransferase activity: acts as a signal transducer in alpha-1 adrenergic receptor-mediated stimulation of phospholipase C-delta (PLCD) activity and is required for coupling alpha-1 adrenergic agonists to the stimulation of phosphoinositide lipid metabolism. In terms of biological role, has cytotoxic activity: is able to induce apoptosis independently of its acyltransferase activity. The protein is Protein-glutamine gamma-glutamyltransferase 2 of Homo sapiens (Human).